A 624-amino-acid chain; its full sequence is Phosphoenolpyruvate carboxykinase [GTP] (624 aa).

Substrate is bound by residues arginine 88 and 222–224 (YGG). Lysine 231 and histidine 250 together coordinate Mn(2+). Serine 272 serves as a coordination point for substrate. Residue 273 to 278 (MCGKTS) coordinates GTP. Residue cysteine 274 is part of the active site. Aspartate 291 is a Mn(2+) binding site. 386–388 (NAR) serves as a coordination point for substrate. GTP contacts are provided by arginine 388 and arginine 420.

The protein belongs to the phosphoenolpyruvate carboxykinase [GTP] family. Mn(2+) serves as cofactor.

Its subcellular location is the cytoplasm. It carries out the reaction oxaloacetate + GTP = phosphoenolpyruvate + GDP + CO2. Its pathway is carbohydrate biosynthesis; gluconeogenesis. Its function is as follows. Catalyzes the conversion of oxaloacetate (OAA) to phosphoenolpyruvate (PEP), the rate-limiting step in the metabolic pathway that produces glucose from lactate and other precursors derived from the citric acid cycle. The polypeptide is Phosphoenolpyruvate carboxykinase [GTP] (Pyrococcus furiosus (strain ATCC 43587 / DSM 3638 / JCM 8422 / Vc1)).